The following is a 209-amino-acid chain: C-type lectin domain family 6 member A (209 aa).

Residues 1-20 (MMQEQQPQSTEKRGWLSLRL) are Cytoplasmic-facing. Residues 21-41 (WSVAGISIALLSACFIVSCVV) traverse the membrane as a helical; Signal-anchor for type II membrane protein segment. The Extracellular portion of the chain corresponds to 42-209 (TYHFTYGETG…SICEMNKIYL (168 aa)). 4 disulfide bridges follow: C66-C78, C79-C90, C107-C202, and C176-C194. A C-type lectin domain is found at 86 to 203 (FGSSCYFISS…CETRRNSICE (118 aa)). Ca(2+) is bound by residues V116, N118, and E122. N131 carries N-linked (GlcNAc...) asparagine glycosylation. Residues E168, N170, and E174 each contribute to the Ca(2+) site. Alpha-D-mannopyranose is bound by residues 168 to 170 (EPN), E174, W182, 190 to 191 (ND), and R198. N-linked (GlcNAc...) asparagine glycosylation occurs at N170. 2 residues coordinate Ca(2+): N190 and D191. A Ca(2+)-binding site is contributed by E203.

As to quaternary structure, associated with FCER1G. Heterodimer with CLEC4D; this heterodimer forms a pattern recognition receptor (PRR) against fungal infection. Expressed in lung, spleen, lymph node, leukocytes, bone marrow, tonsils and dendritic cells. Strongly expressed in purified monocytes and weakly in B-cells. In peripheral blood cells, preferentially expressed in plasmacytoids rather than myeloids.

It is found in the cell membrane. Its function is as follows. Calcium-dependent lectin that acts as a pattern recognition receptor (PRR) of the innate immune system: specifically recognizes and binds alpha-mannans on C.albicans hypheas. Binding of C.albicans alpha-mannans to this receptor complex leads to phosphorylation of the immunoreceptor tyrosine-based activation motif (ITAM) of FCER1G, triggering activation of SYK, CARD9 and NF-kappa-B, consequently driving maturation of antigen-presenting cells and shaping antigen-specific priming of T-cells toward effector T-helper 1 and T-helper 17 cell subtypes. Recognizes also, in a mannose-dependent manner, allergens from house dust mite and fungi, by promoting cysteinyl leukotriene production. Recognizes soluble elements from the eggs of Shistosoma mansoni altering adaptive immune responses. This Homo sapiens (Human) protein is C-type lectin domain family 6 member A.